A 362-amino-acid polypeptide reads, in one-letter code: 3-dehydroquinate synthase (362 aa).

Residues 71 to 76 (DGEKYK), 105 to 109 (GVIGD), 129 to 130 (TT), lysine 142, lysine 151, and 169 to 172 (CLKT) each bind NAD(+). Zn(2+) contacts are provided by glutamate 184, histidine 247, and histidine 264.

Belongs to the sugar phosphate cyclases superfamily. Dehydroquinate synthase family. Co(2+) is required as a cofactor. Zn(2+) serves as cofactor. It depends on NAD(+) as a cofactor.

It is found in the cytoplasm. The enzyme catalyses 7-phospho-2-dehydro-3-deoxy-D-arabino-heptonate = 3-dehydroquinate + phosphate. It functions in the pathway metabolic intermediate biosynthesis; chorismate biosynthesis; chorismate from D-erythrose 4-phosphate and phosphoenolpyruvate: step 2/7. In terms of biological role, catalyzes the conversion of 3-deoxy-D-arabino-heptulosonate 7-phosphate (DAHP) to dehydroquinate (DHQ). This Citrobacter koseri (strain ATCC BAA-895 / CDC 4225-83 / SGSC4696) protein is 3-dehydroquinate synthase.